We begin with the raw amino-acid sequence, 778 residues long: Beta-phellandrene synthase (neryl-diphosphate-cyclizing), chloroplastic (778 aa).

Residues 1-36 (MIVGYRSTIITLSHPKLGNGKTISSNAIFQRSCRVR) constitute a chloroplast transit peptide. The Mg(2+) site is built by Asp531, Asn676, and Glu684. The DDXXD motif motif lies at 531 to 535 (DDHFE).

It belongs to the terpene synthase family. Tpse subfamily. Requires Mg(2+) as cofactor. In terms of tissue distribution, trichomes.

It localises to the plastid. It is found in the chloroplast. The enzyme catalyses neryl diphosphate = beta-phellandrene + diphosphate. Functionally, monoterpene synthase catalyzing the production of beta-phellandrene from neryl diphosphate. Also produces lower amounts of delta-2-carene, alpha-phellandrene and limonene. When incubated in vitro with geranyl diphosphate, catalyzes the formation of acyclic myrcene and ocimene as major products in addition to beta-phellandrene. The sequence is that of Beta-phellandrene synthase (neryl-diphosphate-cyclizing), chloroplastic (PHS1) from Solanum lycopersicum (Tomato).